Here is a 385-residue protein sequence, read N- to C-terminus: AA13 family lytic polysaccharide monooxygenase aasA (385 aa).

A signal peptide spans M1–G18. Residue H19 coordinates Cu(2+). H19 carries the methylhistidine modification. Residues H19–I248 form an N-terminal catalytic module region. 7 cysteine pairs are disulfide-bonded: C40–C43, C66–C245, C102–C203, C118–C145, C153–C161, C167–C173, and C181–C192. H109 provides a ligand contact to Cu(2+). The N-linked (GlcNAc...) asparagine glycan is linked to N120. Y242 provides a ligand contact to Cu(2+). The interval S254–T276 is disordered. The segment covering S256 to T276 has biased composition (low complexity). The CBM20 domain maps to C278–R385. N364 carries N-linked (GlcNAc...) asparagine glycosylation.

Belongs to the polysaccharide monooxygenase AA13 family. Requires Cu(2+) as cofactor. In terms of processing, the catalytically essential N-terminal histidine His-19 is post-translationally modified by methylation to prevent protonation of the histidine side chain, and protect the critical active site of the enzyme from oxidative damage.

It is found in the secreted. It carries out the reaction starch + reduced acceptor + O2 = D-glucono-1,5-lactone-terminated malto-oligosaccharides + short-chain malto-oligosaccharides + acceptor + H2O.. Its function is as follows. Starch-active polysaccharide monooxygenase that oxidizes the C1 position of starch substrates, but not in cellulose, chitin, polygalacturonan or esterified pectin, nor with Arabidopsis stem cell walls. Catalysis by LPMOs requires the reduction of the active-site copper from Cu(II) to Cu(I) by a reducing agent and H(2)O(2) or O(2) as a cosubstrate. The chain is AA13 family lytic polysaccharide monooxygenase aasA from Emericella nidulans (strain FGSC A4 / ATCC 38163 / CBS 112.46 / NRRL 194 / M139) (Aspergillus nidulans).